The following is a 74-amino-acid chain: RNA-binding protein Hfq (74 aa).

In terms of domain architecture, Sm spans 9–69; it reads DQFLNQLRKD…ISTFAPEKNV (61 aa).

It belongs to the Hfq family. Homohexamer.

Its function is as follows. RNA chaperone that binds small regulatory RNA (sRNAs) and mRNAs to facilitate mRNA translational regulation in response to envelope stress, environmental stress and changes in metabolite concentrations. Also binds with high specificity to tRNAs. In Geobacillus sp. (strain WCH70), this protein is RNA-binding protein Hfq.